Consider the following 289-residue polypeptide: Rhodopsin (289 aa).

Residues 1–7 lie on the Extracellular side of the membrane; sequence YLVNPAA. A helical membrane pass occupies residues 8 to 32; the sequence is YAALGAYMFLLILIGFPVNFLTLYV. Residues 33 to 44 are Cytoplasmic-facing; that stretch reads TIEHKKLRTPLN. The helical transmembrane segment at 45 to 67 threads the bilayer; sequence YILLNLAVANLFMVLGGFTTTMY. Residues 68 to 81 lie on the Extracellular side of the membrane; that stretch reads TSMHGYFVLGRLGC. A disulfide bond links C81 and C158. A helical transmembrane segment spans residues 82–104; sequence NLEGFFATMGGEIALWSLVVLAI. Residues 105–107 carry the 'Ionic lock' involved in activated form stabilization motif; sequence ERW. The Cytoplasmic portion of the chain corresponds to 105–123; it reads ERWIVVCKPISNFRFTEDH. The helical transmembrane segment at 124–144 threads the bilayer; sequence AIMGLAFTWVMALSCAVPPLV. The Extracellular segment spans residues 145–173; that stretch reads GWSRYIPEGMQCSCGVDYYTRAEGFNNES. N171 carries N-linked (GlcNAc...) asparagine glycosylation. The helical transmembrane segment at 174–195 threads the bilayer; it reads FVIYMFIVHFLTPLIIISFCYG. The Cytoplasmic segment spans residues 196–223; that stretch reads RLLCAVKEAAAAQQESETTQRAEREVSR. The chain crosses the membrane as a helical span at residues 224–245; it reads MVVMMVISFLMCWLPYASVAWY. The Extracellular portion of the chain corresponds to 246–257; sequence IFCNQGSEFGPI. A helical transmembrane segment spans residues 258-279; the sequence is FMTLPAFFAKSSAIYNPLIYIC. K267 carries the post-translational modification N6-(retinylidene)lysine. Over 280 to 289 the chain is Cytoplasmic; the sequence is MNKQFRHCMI.

The protein belongs to the G-protein coupled receptor 1 family. Opsin subfamily. Post-translationally, phosphorylated on some or all of the serine and threonine residues present in the C-terminal region. Contains one covalently linked retinal chromophore.

Its subcellular location is the membrane. It localises to the cell projection. The protein resides in the cilium. The protein localises to the photoreceptor outer segment. Its function is as follows. Photoreceptor required for image-forming vision at low light intensity. While most salt water fish species use retinal as chromophore, most freshwater fish use 3-dehydroretinal, or a mixture of retinal and 3-dehydroretinal. Light-induced isomerization of 11-cis to all-trans retinal triggers a conformational change that activates signaling via G-proteins. Subsequent receptor phosphorylation mediates displacement of the bound G-protein alpha subunit by arrestin and terminates signaling. The protein is Rhodopsin (rho) of Cottocomephorus inermis (Longfin Baikal sculpin).